A 345-amino-acid chain; its full sequence is S-adenosylmethionine:tRNA ribosyltransferase-isomerase (345 aa).

This sequence belongs to the QueA family. As to quaternary structure, monomer.

It is found in the cytoplasm. The catalysed reaction is 7-aminomethyl-7-carbaguanosine(34) in tRNA + S-adenosyl-L-methionine = epoxyqueuosine(34) in tRNA + adenine + L-methionine + 2 H(+). It participates in tRNA modification; tRNA-queuosine biosynthesis. Transfers and isomerizes the ribose moiety from AdoMet to the 7-aminomethyl group of 7-deazaguanine (preQ1-tRNA) to give epoxyqueuosine (oQ-tRNA). This chain is S-adenosylmethionine:tRNA ribosyltransferase-isomerase, found in Shewanella amazonensis (strain ATCC BAA-1098 / SB2B).